Here is a 672-residue protein sequence, read N- to C-terminus: DNA ligase (672 aa).

NAD(+) contacts are provided by residues 35 to 39 (DAQYD), 84 to 85 (SL), and glutamate 115. Residue lysine 117 is the N6-AMP-lysine intermediate of the active site. Positions 138, 178, 294, and 318 each coordinate NAD(+). Cysteine 412, cysteine 415, cysteine 430, and cysteine 435 together coordinate Zn(2+). In terms of domain architecture, BRCT spans 592–672 (ATGGPFVGKS…AFLQMLQTNA (81 aa)).

This sequence belongs to the NAD-dependent DNA ligase family. LigA subfamily. The cofactor is Mg(2+). Requires Mn(2+) as cofactor.

It catalyses the reaction NAD(+) + (deoxyribonucleotide)n-3'-hydroxyl + 5'-phospho-(deoxyribonucleotide)m = (deoxyribonucleotide)n+m + AMP + beta-nicotinamide D-nucleotide.. In terms of biological role, DNA ligase that catalyzes the formation of phosphodiester linkages between 5'-phosphoryl and 3'-hydroxyl groups in double-stranded DNA using NAD as a coenzyme and as the energy source for the reaction. It is essential for DNA replication and repair of damaged DNA. The chain is DNA ligase from Myxococcus xanthus (strain DK1622).